The primary structure comprises 210 residues: Small ribosomal subunit protein uS3 (210 aa).

The KH type-2 domain maps to 17–86 (IDEFLEKELR…NPQIEVEEIK (70 aa)).

This sequence belongs to the universal ribosomal protein uS3 family. In terms of assembly, part of the 30S ribosomal subunit.

Its function is as follows. Binds the lower part of the 30S subunit head. This Pyrococcus furiosus (strain ATCC 43587 / DSM 3638 / JCM 8422 / Vc1) protein is Small ribosomal subunit protein uS3.